Here is a 690-residue protein sequence, read N- to C-terminus: Elongation factor G (690 aa).

The tr-type G domain maps to 8 to 283 (EDYRNFGIMA…AVVDYLPSPV (276 aa)). Residues 17-24 (AHIDAGKT), 81-85 (DTPGH), and 135-138 (NKMD) each bind GTP.

The protein belongs to the TRAFAC class translation factor GTPase superfamily. Classic translation factor GTPase family. EF-G/EF-2 subfamily.

It localises to the cytoplasm. Catalyzes the GTP-dependent ribosomal translocation step during translation elongation. During this step, the ribosome changes from the pre-translocational (PRE) to the post-translocational (POST) state as the newly formed A-site-bound peptidyl-tRNA and P-site-bound deacylated tRNA move to the P and E sites, respectively. Catalyzes the coordinated movement of the two tRNA molecules, the mRNA and conformational changes in the ribosome. This is Elongation factor G from Rhodopseudomonas palustris (strain BisB18).